A 510-amino-acid chain; its full sequence is Nectin-4 (510 aa).

The N-terminal stretch at methionine 1–alanine 31 is a signal peptide. The 113-residue stretch at glycine 32–arginine 144 folds into the Ig-like V-type domain. The Extracellular segment spans residues glycine 32 to serine 349. 3 disulfides stabilise this stretch: cysteine 52–cysteine 127, cysteine 171–cysteine 223, and cysteine 270–cysteine 315. Ig-like C2-type domains follow at residues proline 148–threonine 237 and alanine 248–aspartate 331. Asparagine 281 carries an N-linked (GlcNAc...) asparagine glycan. Residues valine 350–leucine 370 traverse the membrane as a helical segment. Residues methionine 371–valine 510 are Cytoplasmic-facing. A compositionally biased stretch (basic and acidic residues) spans arginine 399–proline 412. Disordered regions lie at residues arginine 399 to threonine 447 and glutamine 457 to glutamate 476.

It belongs to the nectin family. Self-associates. Interacts via its Ig-like V-type domain with NECTIN1 Ig-like V-type domain. Interacts via its C-terminus with AFDN. As to quaternary structure, (Microbial infection) Interacts (via N-terminus) with measles virus hemagglutinin protein. The soluble form is produced by proteolytic cleavage at the cell surface (shedding), probably by ADAM17/TACE. Predominantly expressed in placenta. Not detected in normal breast epithelium but expressed in breast carcinoma.

Its subcellular location is the cell membrane. It localises to the cell junction. It is found in the adherens junction. The protein resides in the secreted. Seems to be involved in cell adhesion through trans-homophilic and -heterophilic interactions, the latter including specifically interactions with NECTIN1. Does not act as receptor for alpha-herpesvirus entry into cells. Its function is as follows. (Microbial infection) Acts as a receptor for measles virus. The polypeptide is Nectin-4 (Homo sapiens (Human)).